The following is a 145-amino-acid chain: 3-dehydroquinate dehydratase (145 aa).

The active-site Proton acceptor is the Tyr-22. The substrate site is built by Asn-71, His-77, and Asp-84. His-97 functions as the Proton donor in the catalytic mechanism. Residues 98–99 and Arg-108 each bind substrate; that span reads LS.

The protein belongs to the type-II 3-dehydroquinase family. As to quaternary structure, homododecamer.

It catalyses the reaction 3-dehydroquinate = 3-dehydroshikimate + H2O. It participates in metabolic intermediate biosynthesis; chorismate biosynthesis; chorismate from D-erythrose 4-phosphate and phosphoenolpyruvate: step 3/7. In terms of biological role, catalyzes a trans-dehydration via an enolate intermediate. In Francisella tularensis subsp. tularensis (strain WY96-3418), this protein is 3-dehydroquinate dehydratase.